The chain runs to 238 residues: Leucyl/phenylalanyl-tRNA--protein transferase (238 aa).

This sequence belongs to the L/F-transferase family.

It localises to the cytoplasm. It catalyses the reaction N-terminal L-lysyl-[protein] + L-leucyl-tRNA(Leu) = N-terminal L-leucyl-L-lysyl-[protein] + tRNA(Leu) + H(+). The enzyme catalyses N-terminal L-arginyl-[protein] + L-leucyl-tRNA(Leu) = N-terminal L-leucyl-L-arginyl-[protein] + tRNA(Leu) + H(+). It carries out the reaction L-phenylalanyl-tRNA(Phe) + an N-terminal L-alpha-aminoacyl-[protein] = an N-terminal L-phenylalanyl-L-alpha-aminoacyl-[protein] + tRNA(Phe). In terms of biological role, functions in the N-end rule pathway of protein degradation where it conjugates Leu, Phe and, less efficiently, Met from aminoacyl-tRNAs to the N-termini of proteins containing an N-terminal arginine or lysine. This Pseudoalteromonas translucida (strain TAC 125) protein is Leucyl/phenylalanyl-tRNA--protein transferase.